A 284-amino-acid polypeptide reads, in one-letter code: D-tagatose-1,6-bisphosphate aldolase subunit GatY (284 aa).

The active-site Proton donor is the Asp-82. Residues His-83 and His-180 each coordinate Zn(2+). Residue Gly-181 participates in dihydroxyacetone phosphate binding. Residue His-208 coordinates Zn(2+). Residues 209–211 and 230–233 each bind dihydroxyacetone phosphate; these read GAS and NVAT.

It belongs to the class II fructose-bisphosphate aldolase family. TagBP aldolase GatY subfamily. Forms a complex with GatZ. Requires Zn(2+) as cofactor.

The enzyme catalyses D-tagatofuranose 1,6-bisphosphate = D-glyceraldehyde 3-phosphate + dihydroxyacetone phosphate. Its pathway is carbohydrate metabolism; D-tagatose 6-phosphate degradation; D-glyceraldehyde 3-phosphate and glycerone phosphate from D-tagatose 6-phosphate: step 2/2. Its function is as follows. Catalytic subunit of the tagatose-1,6-bisphosphate aldolase GatYZ, which catalyzes the reversible aldol condensation of dihydroxyacetone phosphate (DHAP or glycerone-phosphate) with glyceraldehyde 3-phosphate (G3P) to produce tagatose 1,6-bisphosphate (TBP). Requires GatZ subunit for full activity and stability. Is involved in the catabolism of galactitol. This chain is D-tagatose-1,6-bisphosphate aldolase subunit GatY, found in Escherichia coli O157:H7.